The primary structure comprises 489 residues: L-asparagine permease 1 (489 aa).

The next 12 helical transmembrane spans lie at 25 to 45 (QLQM…GAGG), 49 to 69 (KAGP…FLIL), 100 to 120 (AVGW…TTAI), 137 to 157 (ILAL…VEWF), 162 to 182 (FWAA…GTVF), 210 to 230 (WLPL…VELV), 255 to 275 (IAIF…YTAY), 289 to 309 (IGFH…ALSS), 344 to 364 (YGGI…NAFK), 369 to 389 (FEIV…TIVL), 413 to 433 (SPYS…TMAS), and 439 to 459 (TWTV…WYLV).

The protein belongs to the amino acid-polyamine-organocation (APC) superfamily. Amino acid transporter (AAT) (TC 2.A.3.1) family.

It is found in the cell membrane. This chain is L-asparagine permease 1 (ansP1), found in Mycobacterium tuberculosis (strain CDC 1551 / Oshkosh).